Reading from the N-terminus, the 153-residue chain is Bifunctional protein GAL10 (153 aa).

Positions 1-153 (MSDDIFLVTG…IPIPEHCPME (153 aa)) are galactowaldenase.

The protein in the N-terminal section; belongs to the NAD(P)-dependent epimerase/dehydratase family. This sequence in the C-terminal section; belongs to the aldose epimerase family. NAD(+) is required as a cofactor.

It carries out the reaction UDP-alpha-D-glucose = UDP-alpha-D-galactose. It catalyses the reaction alpha-D-glucose = beta-D-glucose. Its pathway is carbohydrate metabolism; galactose metabolism. It participates in carbohydrate metabolism; hexose metabolism. In terms of biological role, mutarotase converts alpha-aldose to the beta-anomer. It is active on D-glucose, L-arabinose, D-xylose, D-galactose, maltose and lactose. The protein is Bifunctional protein GAL10 (GAL10) of Candida maltosa (Yeast).